Reading from the N-terminus, the 199-residue chain is Peptidyl-tRNA hydrolase (199 aa).

Tyrosine 15 is a binding site for tRNA. The active-site Proton acceptor is the histidine 20. Residues tyrosine 66, asparagine 68, and asparagine 114 each contribute to the tRNA site.

The protein belongs to the PTH family. In terms of assembly, monomer.

Its subcellular location is the cytoplasm. It catalyses the reaction an N-acyl-L-alpha-aminoacyl-tRNA + H2O = an N-acyl-L-amino acid + a tRNA + H(+). Its function is as follows. Hydrolyzes ribosome-free peptidyl-tRNAs (with 1 or more amino acids incorporated), which drop off the ribosome during protein synthesis, or as a result of ribosome stalling. In terms of biological role, catalyzes the release of premature peptidyl moieties from peptidyl-tRNA molecules trapped in stalled 50S ribosomal subunits, and thus maintains levels of free tRNAs and 50S ribosomes. The chain is Peptidyl-tRNA hydrolase from Burkholderia multivorans (strain ATCC 17616 / 249).